The primary structure comprises 219 residues: MSLGLVGRKVGMTRIFTAEGDSIPVTVLDVSDNRVTQIKTVETDGYTAVQVAFGTRRASRVTKPLAGHLAKAGVQAGEILKEFQIDAAKAAELSSGAVIGVDLFEVGQKVDVQGTSIGKGYAGTIKRYNFSSGRASHGNSRSHNVPGSIGMAQDPGRVFPGKRMTGHMGDETVTVQNLEIARIDADRKLLLVKGAVPGAKGGKVFVTPAVKTRAVKGAK.

Over residues 133–145 (GRASHGNSRSHNV) the composition is skewed to polar residues. Positions 133 to 153 (GRASHGNSRSHNVPGSIGMAQ) are disordered. Residue Q153 is modified to N5-methylglutamine.

This sequence belongs to the universal ribosomal protein uL3 family. Part of the 50S ribosomal subunit. Forms a cluster with proteins L14 and L19. Methylated by PrmB.

One of the primary rRNA binding proteins, it binds directly near the 3'-end of the 23S rRNA, where it nucleates assembly of the 50S subunit. This chain is Large ribosomal subunit protein uL3, found in Paraburkholderia phymatum (strain DSM 17167 / CIP 108236 / LMG 21445 / STM815) (Burkholderia phymatum).